The following is a 25-amino-acid chain: Metallothionein (25 aa).

Cys-3, Cys-5, Cys-11, Cys-13, Cys-18, Cys-20, and Cys-23 together coordinate Cu(+).

It belongs to the metallothionein superfamily. Type 8 family.

In terms of biological role, the metallothioneins are involved in the cellular sequestration of toxic metal ions. Binds six copper (cuprous) ions. This is Metallothionein from Agaricus bisporus (White button mushroom).